Here is a 130-residue protein sequence, read N- to C-terminus: Protein ApaG (130 aa).

Positions 3 to 127 constitute an ApaG domain; it reads RALTRDIEVT…FSLDSPGLVR (125 aa).

The sequence is that of Protein ApaG from Sinorhizobium fredii (strain NBRC 101917 / NGR234).